The sequence spans 316 residues: 4-hydroxy-3-methylbut-2-enyl diphosphate reductase (316 aa).

Cys12 provides a ligand contact to [4Fe-4S] cluster. (2E)-4-hydroxy-3-methylbut-2-enyl diphosphate is bound by residues His41 and His74. 2 residues coordinate dimethylallyl diphosphate: His41 and His74. Residues His41 and His74 each coordinate isopentenyl diphosphate. Cys96 serves as a coordination point for [4Fe-4S] cluster. Position 124 (His124) interacts with (2E)-4-hydroxy-3-methylbut-2-enyl diphosphate. His124 contacts dimethylallyl diphosphate. His124 contributes to the isopentenyl diphosphate binding site. The active-site Proton donor is the Glu126. Position 165 (Thr165) interacts with (2E)-4-hydroxy-3-methylbut-2-enyl diphosphate. Cys195 serves as a coordination point for [4Fe-4S] cluster. Residues Ser223, Ser224, Asn225, and Ser267 each contribute to the (2E)-4-hydroxy-3-methylbut-2-enyl diphosphate site. 4 residues coordinate dimethylallyl diphosphate: Ser223, Ser224, Asn225, and Ser267. The isopentenyl diphosphate site is built by Ser223, Ser224, Asn225, and Ser267.

It belongs to the IspH family. [4Fe-4S] cluster is required as a cofactor.

It carries out the reaction isopentenyl diphosphate + 2 oxidized [2Fe-2S]-[ferredoxin] + H2O = (2E)-4-hydroxy-3-methylbut-2-enyl diphosphate + 2 reduced [2Fe-2S]-[ferredoxin] + 2 H(+). It catalyses the reaction dimethylallyl diphosphate + 2 oxidized [2Fe-2S]-[ferredoxin] + H2O = (2E)-4-hydroxy-3-methylbut-2-enyl diphosphate + 2 reduced [2Fe-2S]-[ferredoxin] + 2 H(+). It functions in the pathway isoprenoid biosynthesis; dimethylallyl diphosphate biosynthesis; dimethylallyl diphosphate from (2E)-4-hydroxy-3-methylbutenyl diphosphate: step 1/1. The protein operates within isoprenoid biosynthesis; isopentenyl diphosphate biosynthesis via DXP pathway; isopentenyl diphosphate from 1-deoxy-D-xylulose 5-phosphate: step 6/6. Catalyzes the conversion of 1-hydroxy-2-methyl-2-(E)-butenyl 4-diphosphate (HMBPP) into a mixture of isopentenyl diphosphate (IPP) and dimethylallyl diphosphate (DMAPP). Acts in the terminal step of the DOXP/MEP pathway for isoprenoid precursor biosynthesis. In Acidithiobacillus ferrooxidans (strain ATCC 53993 / BNL-5-31) (Leptospirillum ferrooxidans (ATCC 53993)), this protein is 4-hydroxy-3-methylbut-2-enyl diphosphate reductase.